We begin with the raw amino-acid sequence, 442 residues long: C4-dicarboxylate transport protein 2 (442 aa).

9 helical membrane passes run 20–39, 52–74, 89–111, 141–158, 162–179, 200–221, 231–253, 342–364, and 368–387; these read QLYV…GHYY, AFIK…TGIA, AMLY…ANVV, VTGF…GAFA, ILQV…LALV, LVSV…FTIG, LAML…LGAV, ILLL…AGFI, and ATLS…ILGV.

It belongs to the dicarboxylate/amino acid:cation symporter (DAACS) (TC 2.A.23) family.

It is found in the cell inner membrane. Responsible for the transport of dicarboxylates such as succinate, fumarate, and malate from the periplasm across the membrane. This transport system plays an important role in the energy supply of rhizobium-legume symbionts. The protein is C4-dicarboxylate transport protein 2 (dctA2) of Mesorhizobium japonicum (strain LMG 29417 / CECT 9101 / MAFF 303099) (Mesorhizobium loti (strain MAFF 303099)).